We begin with the raw amino-acid sequence, 84 residues long: UPF0386 protein NGR_c10980 (84 aa).

Belongs to the UPF0386 family.

This chain is UPF0386 protein NGR_c10980, found in Sinorhizobium fredii (strain NBRC 101917 / NGR234).